Reading from the N-terminus, the 546-residue chain is Chaperonin GroEL (546 aa).

ATP contacts are provided by residues 29-32 (TMGP), Lys-50, 86-90 (DGTTT), Gly-412, 476-478 (NAA), and Asp-492.

Belongs to the chaperonin (HSP60) family. Forms a cylinder of 14 subunits composed of two heptameric rings stacked back-to-back. Interacts with the co-chaperonin GroES.

It localises to the cytoplasm. The enzyme catalyses ATP + H2O + a folded polypeptide = ADP + phosphate + an unfolded polypeptide.. Its function is as follows. Together with its co-chaperonin GroES, plays an essential role in assisting protein folding. The GroEL-GroES system forms a nano-cage that allows encapsulation of the non-native substrate proteins and provides a physical environment optimized to promote and accelerate protein folding. In terms of biological role, may play a protective role against the defense mechanisms generated by the infected macrophages. The sequence is that of Chaperonin GroEL from Legionella micdadei (Tatlockia micdadei).